The primary structure comprises 87 residues: UPF0250 protein Ent638_1166 (87 aa).

The protein belongs to the UPF0250 family.

This chain is UPF0250 protein Ent638_1166, found in Enterobacter sp. (strain 638).